A 359-amino-acid chain; its full sequence is UDP-3-O-acylglucosamine N-acyltransferase (359 aa).

His253 acts as the Proton acceptor in catalysis.

It belongs to the transferase hexapeptide repeat family. LpxD subfamily. In terms of assembly, homotrimer.

It catalyses the reaction a UDP-3-O-[(3R)-3-hydroxyacyl]-alpha-D-glucosamine + a (3R)-hydroxyacyl-[ACP] = a UDP-2-N,3-O-bis[(3R)-3-hydroxyacyl]-alpha-D-glucosamine + holo-[ACP] + H(+). The protein operates within bacterial outer membrane biogenesis; LPS lipid A biosynthesis. Catalyzes the N-acylation of UDP-3-O-acylglucosamine using 3-hydroxyacyl-ACP as the acyl donor. Is involved in the biosynthesis of lipid A, a phosphorylated glycolipid that anchors the lipopolysaccharide to the outer membrane of the cell. This is UDP-3-O-acylglucosamine N-acyltransferase from Burkholderia cenocepacia (strain ATCC BAA-245 / DSM 16553 / LMG 16656 / NCTC 13227 / J2315 / CF5610) (Burkholderia cepacia (strain J2315)).